We begin with the raw amino-acid sequence, 130 residues long: Putative pre-16S rRNA nuclease (130 aa).

The protein belongs to the YqgF nuclease family.

It localises to the cytoplasm. Its function is as follows. Could be a nuclease involved in processing of the 5'-end of pre-16S rRNA. This chain is Putative pre-16S rRNA nuclease, found in Sulfurimonas denitrificans (strain ATCC 33889 / DSM 1251) (Thiomicrospira denitrificans (strain ATCC 33889 / DSM 1251)).